The following is a 349-amino-acid chain: Fe(3+) ions import ATP-binding protein FbpC (349 aa).

The 233-residue stretch at 4-236 (LELHHIGKSY…PVDEPTATFL (233 aa)) folds into the ABC transporter domain. 36–43 (GPSGSGKT) is a binding site for ATP.

Belongs to the ABC transporter superfamily. Fe(3+) ion importer (TC 3.A.1.10) family. The complex is composed of two ATP-binding proteins (FbpC), two transmembrane proteins (FbpB) and a solute-binding protein (FbpA).

It is found in the cell inner membrane. The catalysed reaction is Fe(3+)(out) + ATP + H2O = Fe(3+)(in) + ADP + phosphate + H(+). Functionally, part of the ABC transporter complex FbpABC involved in Fe(3+) ions import. Responsible for energy coupling to the transport system. This chain is Fe(3+) ions import ATP-binding protein FbpC, found in Yersinia pseudotuberculosis serotype I (strain IP32953).